Reading from the N-terminus, the 580-residue chain is Arginine--tRNA ligase (580 aa).

The short motif at 123–133 is the 'HIGH' region element; the sequence is PNLAKEMHVGH.

This sequence belongs to the class-I aminoacyl-tRNA synthetase family. As to quaternary structure, monomer.

The protein localises to the cytoplasm. The catalysed reaction is tRNA(Arg) + L-arginine + ATP = L-arginyl-tRNA(Arg) + AMP + diphosphate. In Pseudoalteromonas translucida (strain TAC 125), this protein is Arginine--tRNA ligase.